Consider the following 192-residue polypeptide: Small ribosomal subunit protein bS16 (192 aa).

The disordered stretch occupies residues 153–192 (AEAKAKAEAEAAAAAEEAAETEETPVEAAAEEAPAAESAE). Residues 178 to 192 (VEAAAEEAPAAESAE) are compositionally biased toward low complexity.

It belongs to the bacterial ribosomal protein bS16 family.

This is Small ribosomal subunit protein bS16 from Porphyromonas gingivalis (strain ATCC BAA-308 / W83).